Reading from the N-terminus, the 1203-residue chain is Serine/threonine-protein kinase Nek1 (1203 aa).

Residues 4–258 enclose the Protein kinase domain; that stretch reads YVRLQKIGEG…VNSILEKGFI (255 aa). ATP contacts are provided by residues 10 to 18 and lysine 33; that span reads IGEGSFGKA. Aspartate 128 acts as the Proton acceptor in catalysis. At threonine 156 the chain carries Phosphothreonine. Threonine 162 carries the post-translational modification Phosphothreonine; by autocatalysis. Residues 329 to 357 are disordered; that stretch reads LLEKKPPPKHKQAHQIPVKKMNSGEERKK. Serine 417 and serine 437 each carry phosphoserine. A Phosphothreonine modification is found at threonine 615. The residue at position 618 (serine 618) is a Phosphoserine. 2 disordered regions span residues 643 to 662 and 674 to 708; these read LTDT…SSKR and AQED…ISSD. Basic and acidic residues predominate over residues 674-683; that stretch reads AQEDEKEKQH. Phosphoserine is present on residues serine 750, serine 786, serine 820, and serine 832. Disordered regions lie at residues 814–866 and 888–925; these read PSAT…LPPV and AVQQ…GCDV. The span at 839–850 shows a compositional bias: acidic residues; the sequence is NVEEPDDLETEV. At serine 997 the chain carries Phosphoserine. Disordered regions lie at residues 1021–1045 and 1063–1120; these read SLEI…TVFE and REQP…ETTS. Serine 1071 is modified (phosphoserine).

It belongs to the protein kinase superfamily. NEK Ser/Thr protein kinase family. NIMA subfamily. In terms of assembly, binds to CBY2. Found in a complex with CFAP410, NEK1 and SPATA7. Interacts with CFAP410. Interacts (via Ser-997 phosphorylated form) with 14-3-3 proteins. The cofactor is Mg(2+). In terms of tissue distribution, predominantly in testes (germ cells and Sertoli cells). Lower levels in ovary (oocytes and granulosa cells), thymus and lung.

It localises to the nucleus. Its subcellular location is the cytoplasm. The protein resides in the cytoskeleton. It is found in the microtubule organizing center. The protein localises to the centrosome. It catalyses the reaction L-seryl-[protein] + ATP = O-phospho-L-seryl-[protein] + ADP + H(+). The enzyme catalyses L-threonyl-[protein] + ATP = O-phospho-L-threonyl-[protein] + ADP + H(+). Phosphorylates serines and threonines, but also appears to possess tyrosine kinase activity. Involved in DNA damage checkpoint control and for proper DNA damage repair. In response to injury that includes DNA damage, NEK1 phosphorylates VDAC1 to limit mitochondrial cell death. May be implicated in the control of meiosis. Involved in cilium assembly. The chain is Serine/threonine-protein kinase Nek1 (Nek1) from Mus musculus (Mouse).